Reading from the N-terminus, the 193-residue chain is Small ribosomal subunit protein eS1 (193 aa).

The protein belongs to the eukaryotic ribosomal protein eS1 family.

The sequence is that of Small ribosomal subunit protein eS1 from Methanobrevibacter smithii (strain ATCC 35061 / DSM 861 / OCM 144 / PS).